The sequence spans 190 residues: RRP15-like protein (190 aa).

A compositionally biased stretch (basic and acidic residues) spans 1–11 (MSTKNRDRLVV). Disordered stretches follow at residues 1–69 (MSTK…TRKE) and 119–190 (QKTM…SDED). Over residues 55–66 (QRKKKKVIKKLT) the composition is skewed to basic residues. A coiled-coil region spans residues 59-84 (KKVIKKLTRKEQSLKHSVKEYRIKLA). Residues 119–153 (QKTMSDAVKEKMTARDRKEARERFDGKNFDSDKFA) show a composition bias toward basic and acidic residues. Residues 167–190 (GEEEDEQMNIGDDEIDAGNYSDED) are compositionally biased toward acidic residues.

It belongs to the RRP15 family.

The protein is RRP15-like protein of Caenorhabditis briggsae.